Reading from the N-terminus, the 266-residue chain is Putative carbamate hydrolase RutD (266 aa).

Belongs to the AB hydrolase superfamily. Hydrolase RutD family.

The enzyme catalyses carbamate + 2 H(+) = NH4(+) + CO2. In terms of biological role, involved in pyrimidine catabolism. May facilitate the hydrolysis of carbamate, a reaction that can also occur spontaneously. This chain is Putative carbamate hydrolase RutD, found in Escherichia coli O139:H28 (strain E24377A / ETEC).